Consider the following 305-residue polypeptide: N-acetylmuramic acid 6-phosphate etherase (305 aa).

A disordered region spans residues 1–24; sequence MTTPPSSPLSDPRRTEGVHPTHTD. Residues 11–24 are compositionally biased toward basic and acidic residues; sequence DPRRTEGVHPTHTD. In terms of domain architecture, SIS spans 62-225; that stretch reads ALPRLERGGR…SSALMVRLGK (164 aa). Glutamate 90 functions as the Proton donor in the catalytic mechanism. The active site involves glutamate 121.

The protein belongs to the GCKR-like family. MurNAc-6-P etherase subfamily. In terms of assembly, homodimer.

It carries out the reaction N-acetyl-D-muramate 6-phosphate + H2O = N-acetyl-D-glucosamine 6-phosphate + (R)-lactate. The protein operates within amino-sugar metabolism; N-acetylmuramate degradation. In terms of biological role, specifically catalyzes the cleavage of the D-lactyl ether substituent of MurNAc 6-phosphate, producing GlcNAc 6-phosphate and D-lactate. This chain is N-acetylmuramic acid 6-phosphate etherase, found in Deinococcus geothermalis (strain DSM 11300 / CIP 105573 / AG-3a).